Here is a 142-residue protein sequence, read N- to C-terminus: Large ribosomal subunit protein uL13 (142 aa).

This sequence belongs to the universal ribosomal protein uL13 family. Part of the 50S ribosomal subunit.

This protein is one of the early assembly proteins of the 50S ribosomal subunit, although it is not seen to bind rRNA by itself. It is important during the early stages of 50S assembly. The protein is Large ribosomal subunit protein uL13 of Agathobacter rectalis (strain ATCC 33656 / DSM 3377 / JCM 17463 / KCTC 5835 / VPI 0990) (Eubacterium rectale).